The sequence spans 348 residues: Alanine racemase (348 aa).

Lys-34 acts as the Proton acceptor; specific for D-alanine in catalysis. Lys-34 carries the post-translational modification N6-(pyridoxal phosphate)lysine. Residue Arg-127 coordinates substrate. Tyr-243 acts as the Proton acceptor; specific for L-alanine in catalysis. Residue Met-291 participates in substrate binding.

The protein belongs to the alanine racemase family. Pyridoxal 5'-phosphate serves as cofactor.

The catalysed reaction is L-alanine = D-alanine. The protein operates within amino-acid biosynthesis; D-alanine biosynthesis; D-alanine from L-alanine: step 1/1. In terms of biological role, catalyzes the interconversion of L-alanine and D-alanine. May also act on other amino acids. The polypeptide is Alanine racemase (alr) (Coprothermobacter proteolyticus (strain ATCC 35245 / DSM 5265 / OCM 4 / BT)).